The following is an 836-amino-acid chain: Ethylene receptor 3 (836 aa).

3 helical membrane passes run 137–157, 166–186, and 204–224; these read LIAA…AGLR, LVQF…TAFT, and LTAL…PQLL. Residues cysteine 176 and histidine 180 each coordinate Cu cation. The region spanning 269-413 is the GAF domain; that stretch reads DRHTVLYTTL…VVAGQVAVAL (145 aa). Residues 416–452 adopt a coiled-coil conformation; it reads ATLLEESRAMRDRLAEQNRELLQARRDALMANEARQA. The 235-residue stretch at 457-691 folds into the Histidine kinase domain; the sequence is MSQGMRRPIH…LVLRFQLQSP (235 aa). A Response regulatory domain is found at 718–834; that stretch reads LLIDDDDDIN…LKDELARILQ (117 aa).

This sequence belongs to the ethylene receptor family. Cu cation serves as cofactor.

The protein localises to the endoplasmic reticulum membrane. It catalyses the reaction ATP + protein L-histidine = ADP + protein N-phospho-L-histidine.. Ethylene receptor related to bacterial two-component regulators. Acts as a negative regulator of ethylene signaling. May delay the transition from the vegetative stage to the floral stage by up-regulating GI (GIGANTEA) and RCN1 and cause starch accumulation in stems by down-regulating the alpha-amylase AMY3D. This chain is Ethylene receptor 3, found in Oryza sativa subsp. indica (Rice).